The sequence spans 269 residues: Rhamnulose-1-phosphate aldolase (269 aa).

The active site involves Glu-119. Zn(2+) contacts are provided by His-142, His-144, and His-214.

Belongs to the aldolase class II family. RhaD subfamily. Zn(2+) is required as a cofactor.

It is found in the cytoplasm. The catalysed reaction is L-rhamnulose 1-phosphate = (S)-lactaldehyde + dihydroxyacetone phosphate. It functions in the pathway carbohydrate degradation; L-rhamnose degradation; glycerone phosphate from L-rhamnose: step 3/3. Functionally, catalyzes the reversible cleavage of L-rhamnulose-1-phosphate to dihydroxyacetone phosphate (DHAP) and L-lactaldehyde. This is Rhamnulose-1-phosphate aldolase from Bacteroides thetaiotaomicron (strain ATCC 29148 / DSM 2079 / JCM 5827 / CCUG 10774 / NCTC 10582 / VPI-5482 / E50).